Here is a 409-residue protein sequence, read N- to C-terminus: Dual-specificity RNA methyltransferase RlmN (409 aa).

The active-site Proton acceptor is Glu-117. One can recognise a Radical SAM core domain in the interval 128 to 377 (LNGRKTLCIS…CTIRQTRGDD (250 aa)). Cysteines 135 and 382 form a disulfide. [4Fe-4S] cluster-binding residues include Cys-142, Cys-146, and Cys-149. Residues 205-206 (GE), Ser-237, 259-261 (SLH), and Asn-339 each bind S-adenosyl-L-methionine. The S-methylcysteine intermediate role is filled by Cys-382.

This sequence belongs to the radical SAM superfamily. RlmN family. It depends on [4Fe-4S] cluster as a cofactor.

It localises to the cytoplasm. The enzyme catalyses adenosine(2503) in 23S rRNA + 2 reduced [2Fe-2S]-[ferredoxin] + 2 S-adenosyl-L-methionine = 2-methyladenosine(2503) in 23S rRNA + 5'-deoxyadenosine + L-methionine + 2 oxidized [2Fe-2S]-[ferredoxin] + S-adenosyl-L-homocysteine. It catalyses the reaction adenosine(37) in tRNA + 2 reduced [2Fe-2S]-[ferredoxin] + 2 S-adenosyl-L-methionine = 2-methyladenosine(37) in tRNA + 5'-deoxyadenosine + L-methionine + 2 oxidized [2Fe-2S]-[ferredoxin] + S-adenosyl-L-homocysteine. Functionally, specifically methylates position 2 of adenine 2503 in 23S rRNA and position 2 of adenine 37 in tRNAs. m2A2503 modification seems to play a crucial role in the proofreading step occurring at the peptidyl transferase center and thus would serve to optimize ribosomal fidelity. The sequence is that of Dual-specificity RNA methyltransferase RlmN from Psychrobacter arcticus (strain DSM 17307 / VKM B-2377 / 273-4).